A 64-amino-acid chain; its full sequence is MPKMKSHSGASKRFKVSGKGKLLRQQANRRHLLEHKPSRRTRRLDGTEVVAAADVRRVKKLLGR.

Positions 1 to 41 are disordered; that stretch reads MPKMKSHSGASKRFKVSGKGKLLRQQANRRHLLEHKPSRRT.

The protein belongs to the bacterial ribosomal protein bL35 family.

This is Large ribosomal subunit protein bL35 from Nocardia farcinica (strain IFM 10152).